Here is a 292-residue protein sequence, read N- to C-terminus: NAD kinase (292 aa).

Residue Asp-73 is the Proton acceptor of the active site. NAD(+) is bound by residues 73-74, 147-148, His-158, Arg-175, Asp-177, 188-193, and Gln-248; these read DG, NE, and TGYSLS.

The protein belongs to the NAD kinase family. A divalent metal cation serves as cofactor.

It is found in the cytoplasm. The enzyme catalyses NAD(+) + ATP = ADP + NADP(+) + H(+). Functionally, involved in the regulation of the intracellular balance of NAD and NADP, and is a key enzyme in the biosynthesis of NADP. Catalyzes specifically the phosphorylation on 2'-hydroxyl of the adenosine moiety of NAD to yield NADP. This Buchnera aphidicola subsp. Baizongia pistaciae (strain Bp) protein is NAD kinase.